Reading from the N-terminus, the 349-residue chain is Aspartate carbamoyltransferase catalytic subunit (349 aa).

Residues Arg-59 and Thr-60 each coordinate carbamoyl phosphate. L-aspartate is bound at residue Lys-87. Carbamoyl phosphate is bound by residues Arg-109, His-142, and Gln-145. 2 residues coordinate L-aspartate: Arg-182 and Arg-253. Gly-294 and Pro-295 together coordinate carbamoyl phosphate.

This sequence belongs to the aspartate/ornithine carbamoyltransferase superfamily. ATCase family. As to quaternary structure, heterododecamer (2C3:3R2) of six catalytic PyrB chains organized as two trimers (C3), and six regulatory PyrI chains organized as three dimers (R2).

It catalyses the reaction carbamoyl phosphate + L-aspartate = N-carbamoyl-L-aspartate + phosphate + H(+). The protein operates within pyrimidine metabolism; UMP biosynthesis via de novo pathway; (S)-dihydroorotate from bicarbonate: step 2/3. Its function is as follows. Catalyzes the condensation of carbamoyl phosphate and aspartate to form carbamoyl aspartate and inorganic phosphate, the committed step in the de novo pyrimidine nucleotide biosynthesis pathway. This Synechococcus sp. (strain CC9605) protein is Aspartate carbamoyltransferase catalytic subunit.